Reading from the N-terminus, the 180-residue chain is Crossover junction endodeoxyribonuclease RuvC (180 aa).

Catalysis depends on residues D7, E66, and D138. Residues D7, E66, and D138 each coordinate Mg(2+).

This sequence belongs to the RuvC family. As to quaternary structure, homodimer which binds Holliday junction (HJ) DNA. The HJ becomes 2-fold symmetrical on binding to RuvC with unstacked arms; it has a different conformation from HJ DNA in complex with RuvA. In the full resolvosome a probable DNA-RuvA(4)-RuvB(12)-RuvC(2) complex forms which resolves the HJ. Mg(2+) serves as cofactor.

It localises to the cytoplasm. The enzyme catalyses Endonucleolytic cleavage at a junction such as a reciprocal single-stranded crossover between two homologous DNA duplexes (Holliday junction).. The RuvA-RuvB-RuvC complex processes Holliday junction (HJ) DNA during genetic recombination and DNA repair. Endonuclease that resolves HJ intermediates. Cleaves cruciform DNA by making single-stranded nicks across the HJ at symmetrical positions within the homologous arms, yielding a 5'-phosphate and a 3'-hydroxyl group; requires a central core of homology in the junction. The consensus cleavage sequence is 5'-(A/T)TT(C/G)-3'. Cleavage occurs on the 3'-side of the TT dinucleotide at the point of strand exchange. HJ branch migration catalyzed by RuvA-RuvB allows RuvC to scan DNA until it finds its consensus sequence, where it cleaves and resolves the cruciform DNA. This Burkholderia lata (strain ATCC 17760 / DSM 23089 / LMG 22485 / NCIMB 9086 / R18194 / 383) protein is Crossover junction endodeoxyribonuclease RuvC.